The sequence spans 241 residues: Small ribosomal subunit protein uS3 (241 aa).

Residues 39 to 109 (IRQYITKNLS…QIRINVIEVQ (71 aa)) enclose the KH type-2 domain. A disordered region spans residues 214–241 (EEIPMPVPSQTPRRQRRRQQFEDRSGEE). Positions 232 to 241 (QQFEDRSGEE) are enriched in basic and acidic residues.

This sequence belongs to the universal ribosomal protein uS3 family. As to quaternary structure, part of the 30S ribosomal subunit. Forms a tight complex with proteins S10 and S14.

Its function is as follows. Binds the lower part of the 30S subunit head. Binds mRNA in the 70S ribosome, positioning it for translation. The sequence is that of Small ribosomal subunit protein uS3 from Rippkaea orientalis (strain PCC 8801 / RF-1) (Cyanothece sp. (strain PCC 8801)).